The primary structure comprises 506 residues: Lysine--tRNA ligase (506 aa).

Residues E415 and E422 each coordinate Mg(2+).

The protein belongs to the class-II aminoacyl-tRNA synthetase family. As to quaternary structure, homodimer. Mg(2+) serves as cofactor.

The protein localises to the cytoplasm. It catalyses the reaction tRNA(Lys) + L-lysine + ATP = L-lysyl-tRNA(Lys) + AMP + diphosphate. The polypeptide is Lysine--tRNA ligase (lysS) (Buchnera aphidicola subsp. Acyrthosiphon pisum (strain APS) (Acyrthosiphon pisum symbiotic bacterium)).